Here is a 180-residue protein sequence, read N- to C-terminus: UPF0227 protein YcfP (180 aa).

Belongs to the UPF0227 family.

In Salmonella choleraesuis (strain SC-B67), this protein is UPF0227 protein YcfP.